The primary structure comprises 315 residues: Transaldolase (315 aa).

Lysine 125 functions as the Schiff-base intermediate with substrate in the catalytic mechanism.

Belongs to the transaldolase family. Type 1 subfamily. Homodimer.

It localises to the cytoplasm. It catalyses the reaction D-sedoheptulose 7-phosphate + D-glyceraldehyde 3-phosphate = D-erythrose 4-phosphate + beta-D-fructose 6-phosphate. Its pathway is carbohydrate degradation; pentose phosphate pathway; D-glyceraldehyde 3-phosphate and beta-D-fructose 6-phosphate from D-ribose 5-phosphate and D-xylulose 5-phosphate (non-oxidative stage): step 2/3. Functionally, transaldolase is important for the balance of metabolites in the pentose-phosphate pathway. The chain is Transaldolase from Polaromonas naphthalenivorans (strain CJ2).